Reading from the N-terminus, the 84-residue chain is Large ribosomal subunit protein bL27 (84 aa).

The interval Met1–Leu21 is disordered. Positions Ala7–Gln19 are enriched in polar residues.

Belongs to the bacterial ribosomal protein bL27 family.

The protein is Large ribosomal subunit protein bL27 of Clavibacter sepedonicus (Clavibacter michiganensis subsp. sepedonicus).